A 106-amino-acid chain; its full sequence is UPF0145 protein BDI_2732 (106 aa).

This sequence belongs to the UPF0145 family.

This is UPF0145 protein BDI_2732 from Parabacteroides distasonis (strain ATCC 8503 / DSM 20701 / CIP 104284 / JCM 5825 / NCTC 11152).